Consider the following 697-residue polypeptide: Putative flagellar export/assembly protein LfhA (697 aa).

The next 7 membrane-spanning stretches (helical) occupy residues 19 to 39, 40 to 60, 66 to 86, 116 to 136, 204 to 224, 242 to 262, and 280 to 302; these read VPLV…PALL, DILF…AVSA, FSLF…LNVA, GNFV…FIVV, AIAG…IGIF, IGDG…AAII, and LLAS…VVPG.

This sequence belongs to the FHIPEP (flagella/HR/invasion proteins export pore) family.

Its subcellular location is the cell inner membrane. Its function is as follows. Part of the flagellar gene cluster Flag-2. However, the Flag-2 flagellar system could be inactive in strain 042 due to a frameshift in lfgC. The sequence is that of Putative flagellar export/assembly protein LfhA from Escherichia coli O44:H18 (strain 042 / EAEC).